A 249-amino-acid chain; its full sequence is Small ribosomal subunit protein uS2 (249 aa).

Belongs to the universal ribosomal protein uS2 family.

This Polynucleobacter asymbioticus (strain DSM 18221 / CIP 109841 / QLW-P1DMWA-1) (Polynucleobacter necessarius subsp. asymbioticus) protein is Small ribosomal subunit protein uS2.